Reading from the N-terminus, the 204-residue chain is Pantothenate transporter PanT (204 aa).

6 helical membrane passes run 18–38 (IILL…AVIV), 39–59 (GAQP…LGAR), 63–83 (FIGG…PGSI), 86–106 (LMFQ…LIIG), 123–143 (LGLG…VVLL), and 176–196 (IFEI…LVPI).

As to quaternary structure, in E.coli forms a stable energy-coupling factor (ECF) transporter complex probably composed of a membrane-embedded substrate-binding protein (S component), two ATP-binding proteins (A components) and a transmembrane protein (T component).

The protein resides in the cell membrane. Its function is as follows. Probable pantothenate-binding protein that interacts with the energy-coupling factor (ECF) ABC-transporter complex. Unlike classic ABC transporters this ECF transporter provides the energy necessary to transport a number of different substrates. The substrates themselves are bound by transmembrane, not extracytoplasmic soluble proteins and transport it into cells. Upon coexpression with its energy-coupling factor (ECF) ABC-transporter complex EcfA1A2T in E.coli allows pantothenate uptake; uptake requires both PanT and EcfA1A2T. In Leuconostoc mesenteroides subsp. mesenteroides (strain ATCC 8293 / DSM 20343 / BCRC 11652 / CCM 1803 / JCM 6124 / NCDO 523 / NBRC 100496 / NCIMB 8023 / NCTC 12954 / NRRL B-1118 / 37Y), this protein is Pantothenate transporter PanT (panT).